Reading from the N-terminus, the 508-residue chain is Photosystem II CP47 reaction center protein (508 aa).

6 helical membrane passes run 21 to 36 (SVHI…WAGS), 101 to 115 (IVFS…IWHW), 140 to 156 (GIHL…FGAF), 203 to 218 (IAAG…FHLS), 237 to 252 (VLSS…AFVV), and 457 to 472 (SFAL…HGAR).

Belongs to the PsbB/PsbC family. PsbB subfamily. In terms of assembly, PSII is composed of 1 copy each of membrane proteins PsbA, PsbB, PsbC, PsbD, PsbE, PsbF, PsbH, PsbI, PsbJ, PsbK, PsbL, PsbM, PsbT, PsbX, PsbY, PsbZ, Psb30/Ycf12, at least 3 peripheral proteins of the oxygen-evolving complex and a large number of cofactors. It forms dimeric complexes. Requires Binds multiple chlorophylls. PSII binds additional chlorophylls, carotenoids and specific lipids. as cofactor.

The protein localises to the plastid. Its subcellular location is the chloroplast thylakoid membrane. Functionally, one of the components of the core complex of photosystem II (PSII). It binds chlorophyll and helps catalyze the primary light-induced photochemical processes of PSII. PSII is a light-driven water:plastoquinone oxidoreductase, using light energy to abstract electrons from H(2)O, generating O(2) and a proton gradient subsequently used for ATP formation. The protein is Photosystem II CP47 reaction center protein of Barbarea verna (Land cress).